A 185-amino-acid chain; its full sequence is MVTMSKQTCIELPVNPIVLGKLGSTYGIRGWLRVFSSTEHAEDIFAYQPWFIQRAGRWQHIELEAWKHHNQDMIIKIKGIDDLDAANSLTNCEIIVDSEQLPELDTGDYYWKDLIGCQVISTAGYNLGTVNDMMETGSNDVMVVKANLKDAFGVKERLIPFLDGQVIKKVDLATKTIEVDWDPGF.

Residues 106–185 (TGDYYWKDLI…TIEVDWDPGF (80 aa)) form the PRC barrel domain.

It belongs to the RimM family. In terms of assembly, binds ribosomal protein uS19.

Its subcellular location is the cytoplasm. Its function is as follows. An accessory protein needed during the final step in the assembly of 30S ribosomal subunit, possibly for assembly of the head region. Essential for efficient processing of 16S rRNA. May be needed both before and after RbfA during the maturation of 16S rRNA. It has affinity for free ribosomal 30S subunits but not for 70S ribosomes. The polypeptide is Ribosome maturation factor RimM (Photorhabdus laumondii subsp. laumondii (strain DSM 15139 / CIP 105565 / TT01) (Photorhabdus luminescens subsp. laumondii)).